Here is a 189-residue protein sequence, read N- to C-terminus: MTEIRRETKETKIEVKLEINGSGKSNISTGVGFFDHMLEALAKHSGMDLEVFCDGDIYVDYHHTVEDVGIVLGEALFNEVYPVQNIERYANAVAILDEAAVEVDLDIGGRPYLVYDLPREGMIKDFDMELVEEFFKSLVFNFKIAAHIIYKRGTNKHHIVESAFKSFAVALRRALSYRESGIPSTKGII.

It belongs to the imidazoleglycerol-phosphate dehydratase family.

The protein localises to the cytoplasm. The catalysed reaction is D-erythro-1-(imidazol-4-yl)glycerol 3-phosphate = 3-(imidazol-4-yl)-2-oxopropyl phosphate + H2O. It functions in the pathway amino-acid biosynthesis; L-histidine biosynthesis; L-histidine from 5-phospho-alpha-D-ribose 1-diphosphate: step 6/9. The protein is Imidazoleglycerol-phosphate dehydratase of Nautilia profundicola (strain ATCC BAA-1463 / DSM 18972 / AmH).